The primary structure comprises 245 residues: 14-3-3 protein theta (245 aa).

It belongs to the 14-3-3 family. As to quaternary structure, homodimer, and heterodimer with other family members.

The protein localises to the cytoplasm. Its function is as follows. Adapter protein implicated in the regulation of a large spectrum of both general and specialized signaling pathways. Binds to a large number of partners, usually by recognition of a phosphoserine or phosphothreonine motif. Binding generally results in the modulation of the activity of the binding partner. The protein is 14-3-3 protein theta (YWHAQ) of Gallus gallus (Chicken).